The chain runs to 229 residues: Uracil-DNA glycosylase (229 aa).

D64 serves as the catalytic Proton acceptor.

This sequence belongs to the uracil-DNA glycosylase (UDG) superfamily. UNG family.

It is found in the cytoplasm. The enzyme catalyses Hydrolyzes single-stranded DNA or mismatched double-stranded DNA and polynucleotides, releasing free uracil.. Its function is as follows. Excises uracil residues from the DNA which can arise as a result of misincorporation of dUMP residues by DNA polymerase or due to deamination of cytosine. In Salmonella arizonae (strain ATCC BAA-731 / CDC346-86 / RSK2980), this protein is Uracil-DNA glycosylase.